We begin with the raw amino-acid sequence, 524 residues long: DEAD-box ATP-dependent RNA helicase CshA (524 aa).

The Q motif motif lies at 1–29; sequence MKFNELNLSADLLAEIEKAGFVEASPIQE. The region spanning 32 to 202 is the Helicase ATP-binding domain; it reads IPLALEGKDV…VQFMKAPEHV (171 aa). 45–52 contributes to the ATP binding site; that stretch reads AQTGTGKT. The short motif at 150–153 is the DEAD box element; that stretch reads DEAD. One can recognise a Helicase C-terminal domain in the interval 213-373; that stretch reads LVDQYYIRVK…GLKPASVEES (161 aa). The interval 440-524 is disordered; that stretch reads EKPLPFKPSG…GFVIRNKGDK (85 aa). The span at 463–498 shows a compositional bias: basic and acidic residues; that stretch reads RRGDDRRERDRRGNGRRDEFKKGSRGNDRFDKEKRY.

It belongs to the DEAD box helicase family. CshA subfamily. As to quaternary structure, oligomerizes, may be a member of the RNA degradosome.

The protein localises to the cytoplasm. It carries out the reaction ATP + H2O = ADP + phosphate + H(+). DEAD-box RNA helicase possibly involved in RNA degradation. Unwinds dsRNA in both 5'- and 3'-directions, has RNA-dependent ATPase activity. This is DEAD-box ATP-dependent RNA helicase CshA from Streptococcus pneumoniae serotype 4 (strain ATCC BAA-334 / TIGR4).